The primary structure comprises 229 residues: Guanylate kinase (229 aa).

Positions 7–42 (RVLQKCAYREEFKGDMERSTAATSKLPLEVELSRNS) constitute an RPE1 insert domain. Positions 44 to 222 (GLIIILSSPS…TLKKIHAIIV (179 aa)) constitute a Guanylate kinase-like domain. ATP is bound at residue 51–58 (SPSGTGKS).

This sequence belongs to the guanylate kinase family.

The protein localises to the cytoplasm. It carries out the reaction GMP + ATP = GDP + ADP. Functionally, essential for recycling GMP and indirectly, cGMP. In Rickettsia conorii (strain ATCC VR-613 / Malish 7), this protein is Guanylate kinase (gmk).